The primary structure comprises 238 residues: Gas vesicle protein F (238 aa).

The protein belongs to the gas vesicle GvpF/GvpL family. Binds GvpA.

The protein localises to the gas vesicle. A minor component of the gas vesicle, may be involved in preventing GvpA aggregation during gas vesicle nucleation. Gas vesicles are hollow, gas filled proteinaceous nanostructures found in some microorganisms. It is not clear what function gas vesicles perform in soil bacteria. This is Gas vesicle protein F from Streptomyces sp. (strain CB03234).